A 303-amino-acid polypeptide reads, in one-letter code: N-acetyl-D-glucosamine kinase (303 aa).

ATP-binding positions include 4–11 (GFDIGGTK) and 133–140 (GVGGGLIF). Zn(2+) is bound by residues H157, C177, C179, and C184.

This sequence belongs to the ROK (NagC/XylR) family. NagK subfamily.

The catalysed reaction is N-acetyl-D-glucosamine + ATP = N-acetyl-D-glucosamine 6-phosphate + ADP + H(+). Its pathway is cell wall biogenesis; peptidoglycan recycling. In terms of biological role, catalyzes the phosphorylation of N-acetyl-D-glucosamine (GlcNAc) derived from cell-wall degradation, yielding GlcNAc-6-P. The protein is N-acetyl-D-glucosamine kinase of Escherichia coli O157:H7.